We begin with the raw amino-acid sequence, 317 residues long: L-lactate dehydrogenase (317 aa).

Residues valine 17, aspartate 38, lysine 43, tyrosine 68, and 82 to 83 (GV) contribute to the NAD(+) site. Residue arginine 91 participates in substrate binding. Residues serine 104, 121 to 123 (VSN), and serine 146 contribute to the NAD(+) site. 123-126 (NPVD) lines the substrate pocket. 151 to 154 (DTSR) contributes to the substrate binding site. Residues lysine 156 and histidine 171 each contribute to the beta-D-fructose 1,6-bisphosphate site. Histidine 178 acts as the Proton acceptor in catalysis. Tyrosine 224 is subject to Phosphotyrosine. A substrate-binding site is contributed by threonine 233.

This sequence belongs to the LDH/MDH superfamily. LDH family. As to quaternary structure, homotetramer.

Its subcellular location is the cytoplasm. The catalysed reaction is (S)-lactate + NAD(+) = pyruvate + NADH + H(+). It functions in the pathway fermentation; pyruvate fermentation to lactate; (S)-lactate from pyruvate: step 1/1. With respect to regulation, allosterically activated by fructose 1,6-bisphosphate (FBP). Functionally, catalyzes the conversion of lactate to pyruvate. This Clostridium perfringens (strain SM101 / Type A) protein is L-lactate dehydrogenase.